Consider the following 508-residue polypeptide: Probable monogalactosyldiacylglycerol synthase 3, chloroplastic (508 aa).

The transit peptide at 1-60 (MAASSSSSSSMASPRGRSIRETVLETVAAYHQQQRMRRKFRKSLSYAGELSSAGRARGEG) directs the protein to the chloroplast. A disordered region spans residues 51 to 79 (SSAGRARGEGGASSSASTTSLCGPDEDDE).

This sequence belongs to the glycosyltransferase 28 family.

It localises to the plastid. It is found in the chloroplast membrane. It carries out the reaction a 1,2-diacyl-sn-glycerol + UDP-alpha-D-galactose = a 1,2-diacyl-3-O-(beta-D-galactosyl)-sn-glycerol + UDP + H(+). In terms of biological role, involved in the synthesis of the major structural component of photosynthetic membranes. In Oryza sativa subsp. japonica (Rice), this protein is Probable monogalactosyldiacylglycerol synthase 3, chloroplastic (MGD3).